The following is a 642-amino-acid chain: ATP-dependent rRNA helicase spb4 (642 aa).

Residues 14–42 (WDGVTPALSEWVLDAVASMGFTRMTPVQA) carry the Q motif motif. Positions 45–250 (IPLFMAHKDV…RVGLRNPVKV (206 aa)) constitute a Helicase ATP-binding domain. 58 to 65 (AVTGSGKT) is an ATP binding site. Residues 198 to 201 (DEAD) carry the DEAD box motif. In terms of domain architecture, Helicase C-terminal spans 284-438 (AIKHILYSLE…TLTITDADAA (155 aa)). A coiled-coil region spans residues 522-625 (AYKDKQREKR…RLLRRAAKDK (104 aa)). Basic and acidic residues-rich tracts occupy residues 527 to 536 (QREKRRKEQV) and 577 to 628 (AKQA…KESK). The tract at residues 527 to 642 (QREKRRKEQV…DDDDEFKGFD (116 aa)) is disordered. A compositionally biased stretch (acidic residues) spans 632-642 (GDDDDEFKGFD).

Belongs to the DEAD box helicase family. DDX55/SPB4 subfamily. Component of pre-60S ribosomal complexes.

The protein localises to the nucleus. The protein resides in the nucleolus. The enzyme catalyses ATP + H2O = ADP + phosphate + H(+). Its function is as follows. ATP-binding RNA helicase involved in the biogenesis of 60S ribosomal subunits. Binds 90S pre-ribosomal particles and dissociates from pre-60S ribosomal particles after processing of 27SB pre-rRNA. Required for the normal formation of 18S rRNA through the processing of pre-rRNAs at sites A0, A1 and A2, and the normal formation of 25S and 5.8S rRNAs through the processing of pre-rRNAs at sites C1 and C2. This is ATP-dependent rRNA helicase spb4 from Aspergillus niger (strain ATCC MYA-4892 / CBS 513.88 / FGSC A1513).